We begin with the raw amino-acid sequence, 252 residues long: Floral homeotic protein AGAMOUS (252 aa).

The 55-residue stretch at R19–Y73 folds into the MADS-box domain. One can recognise a K-box domain in the interval A103–N193.

Its subcellular location is the nucleus. Probable transcription factor involved in regulating genes that determines stamen and carpel development in wild-type flowers. The protein is Floral homeotic protein AGAMOUS (AG1) of Brassica napus (Rape).